The sequence spans 227 residues: 7-cyano-7-deazaguanine synthase (227 aa).

8 to 18 (VSGGADSATVL) serves as a coordination point for ATP. The Zn(2+) site is built by C192, C202, C205, and C208.

This sequence belongs to the QueC family. The cofactor is Zn(2+).

It carries out the reaction 7-carboxy-7-deazaguanine + NH4(+) + ATP = 7-cyano-7-deazaguanine + ADP + phosphate + H2O + H(+). It functions in the pathway purine metabolism; 7-cyano-7-deazaguanine biosynthesis. In terms of biological role, catalyzes the ATP-dependent conversion of 7-carboxy-7-deazaguanine (CDG) to 7-cyano-7-deazaguanine (preQ(0)). The polypeptide is 7-cyano-7-deazaguanine synthase (Rickettsia akari (strain Hartford)).